Here is a 195-residue protein sequence, read N- to C-terminus: Protein Fer3 (195 aa).

Disordered stretches follow at residues 1-24 (MQHP…LWGQ) and 56-82 (PLVP…RRRV). Residues 63 to 75 (STNGRANGSSSSS) show a composition bias toward low complexity. In terms of domain architecture, bHLH spans 86 to 138 (AQRRAANIRERRRMFNLNEAFDKLRRKVPTFAYEKRLSRIETLRLAITYIGFM). The interval 145–175 (TPSNSHKSRSDVYGSMNGHHQAPPPAIHPHH) is disordered.

The protein resides in the nucleus. Its function is as follows. Transcription factor that binds to the E-box and functions as inhibitor of transcription. DNA binding requires dimerization with an E protein. Inhibits transcription activation by ASCL1/MASH1 by sequestering E proteins. The sequence is that of Protein Fer3 (fer3) from Drosophila melanogaster (Fruit fly).